We begin with the raw amino-acid sequence, 439 residues long: MFVDREEELKALNEKLDSNNFEFIVIYGRRRIGKTKLALKSVENREHIYYLAVEGDNLKHFKRYASKVEPTIEYAKEDWEAYFNFLKDKIIIIDEFPNLIKENPNVLSLFQRIVDIHLKNTKTKLIILGSSISMMGEKVLSYKSPLYGRKTGVLKIKPLKFKHLKEFFPKAIWEELVEIYGFADGIPYYLEKVKLPFWDYLDKEIKRVDSFLRYEVDFLMKYEFEEPTTYKKILEAIAFGNHTLGEIKNYLGFKHSDLTPYLKNLIEVEFIERQTPITESVKSKKGRYYIKDNFIAFYFRYIFPNLSAIEEGIFDIEEIKADYNQYLGFVFEKVAKEFLIELNKMNKLPFKFLKIGRWWHRGEEIDLIALNDNDKKALFVEVKWKDLKDRDVKKIYRDLYRKSKLVGLDDYEKYYAIVGKKIESKENGDCLLFDLEDFS.

Position 28 to 35 (28 to 35 (GRRRIGKT)) interacts with ATP.

This is an uncharacterized protein from Methanocaldococcus jannaschii (strain ATCC 43067 / DSM 2661 / JAL-1 / JCM 10045 / NBRC 100440) (Methanococcus jannaschii).